We begin with the raw amino-acid sequence, 190 residues long: Hypoxanthine/guanine phosphoribosyltransferase (190 aa).

It belongs to the purine/pyrimidine phosphoribosyltransferase family. Archaeal HPRT subfamily. In terms of assembly, homodimer.

Its subcellular location is the cytoplasm. It carries out the reaction IMP + diphosphate = hypoxanthine + 5-phospho-alpha-D-ribose 1-diphosphate. It catalyses the reaction GMP + diphosphate = guanine + 5-phospho-alpha-D-ribose 1-diphosphate. It participates in purine metabolism; IMP biosynthesis via salvage pathway; IMP from hypoxanthine: step 1/1. Its function is as follows. Catalyzes a salvage reaction resulting in the formation of IMP that is energically less costly than de novo synthesis. In Methanobacterium paludis (strain DSM 25820 / JCM 18151 / SWAN1), this protein is Hypoxanthine/guanine phosphoribosyltransferase.